The chain runs to 422 residues: Ubiquitin-conjugating enzyme E2 Q1 (422 aa).

An N-acetylmethionine modification is found at M1. The segment covering 1-24 (MQQPQPQGQQQPGPGQQLGVQGAA) has biased composition (low complexity). Disordered stretches follow at residues 1–40 (MQQP…PGPC) and 173–221 (QPLP…EDDG). Over residues 25–35 (PGAGGGPGGGP) the composition is skewed to gly residues. A compositionally biased stretch (acidic residues) spans 185-200 (VSSEDEDEEMPEDTED). Residues 212–221 (AEGKKSEDDG) are compositionally biased toward basic and acidic residues. The 165-residue stretch at 251-415 (QATDRLMKEL…VQIHEKNGWY (165 aa)) folds into the UBC core domain. Catalysis depends on C351, which acts as the Glycyl thioester intermediate.

The protein belongs to the ubiquitin-conjugating enzyme family. In terms of assembly, monomer and homodimer. Only the homodimer is linked to ubiquitin through thiolester activation. Interacts (via N-terminus) with B4GALT1 (via N-terminal cytoplasmic domain); the interaction is direct. Autoubiquitinated in vitro in the presence of NEDD4L. Expressed in liver, brain, heart, spleen, lung, kidney, muscle, ovary, epididymis, testis and placenta. Also expressed in thymus and ES cells. Only expressed in the uterus during pregnancy. Expressed in oocytes and during subsequent embryonic development stages (4-cell stage, blastocyst, 8.5 dpc, 13.5 dpc, 16.5 dpc and 18.5 dpc).

The protein localises to the nucleus. Its subcellular location is the cell projection. It is found in the filopodium. The protein resides in the cytoplasm. It localises to the cytosol. It catalyses the reaction S-ubiquitinyl-[E1 ubiquitin-activating enzyme]-L-cysteine + [E2 ubiquitin-conjugating enzyme]-L-cysteine = [E1 ubiquitin-activating enzyme]-L-cysteine + S-ubiquitinyl-[E2 ubiquitin-conjugating enzyme]-L-cysteine.. Its pathway is protein modification; protein ubiquitination. In terms of biological role, catalyzes the covalent attachment of ubiquitin to other proteins. Involved in female fertility and embryo implantation. May be involved in hormonal homeostasis in females. Involved in regulation of B4GALT1 cell surface expression, B4GALT1-mediated cell adhesion to laminin and embryoid body formation. The polypeptide is Ubiquitin-conjugating enzyme E2 Q1 (Ube2q1) (Mus musculus (Mouse)).